Reading from the N-terminus, the 1041-residue chain is FHIP family protein GF15501 (1041 aa).

Disordered regions lie at residues 797–856 (RKGN…NKRR) and 907–987 (SNSS…SEPV). Residue Ser803 is modified to Phosphoserine. Residues 808–824 (NLQQQQALNPAQQQGQQ) show a composition bias toward low complexity. Polar residues-rich tracts occupy residues 825–843 (RSAYATLSAATPVQATPTS) and 907–933 (SNSSSESRGFAPGQQSAGTCETSLSTQ). A compositionally biased stretch (low complexity) spans 942–973 (SGSSSNSSMGGSSQTLSAHSNATTTHSSSTLH).

This sequence belongs to the FHIP family.

The protein is FHIP family protein GF15501 of Drosophila ananassae (Fruit fly).